A 214-amino-acid chain; its full sequence is Probable nicotinate-nucleotide adenylyltransferase (214 aa).

It belongs to the NadD family.

It catalyses the reaction nicotinate beta-D-ribonucleotide + ATP + H(+) = deamido-NAD(+) + diphosphate. The protein operates within cofactor biosynthesis; NAD(+) biosynthesis; deamido-NAD(+) from nicotinate D-ribonucleotide: step 1/1. In terms of biological role, catalyzes the reversible adenylation of nicotinate mononucleotide (NaMN) to nicotinic acid adenine dinucleotide (NaAD). This Mycolicibacterium vanbaalenii (strain DSM 7251 / JCM 13017 / BCRC 16820 / KCTC 9966 / NRRL B-24157 / PYR-1) (Mycobacterium vanbaalenii) protein is Probable nicotinate-nucleotide adenylyltransferase.